The sequence spans 137 residues: uncharacterized protein (137 aa).

The 132-residue stretch at 5–136 folds into the HTH marR-type domain; the sequence is NRHLIHQINQ…FSHLFRMFLQ (132 aa). Residues 51–74 constitute a DNA-binding region (H-T-H motif); the sequence is QKEIWSYLNVEAPTVTRTIKRLEE.

This is an uncharacterized protein from Bacillus subtilis (strain 168).